We begin with the raw amino-acid sequence, 247 residues long: Type III pantothenate kinase (247 aa).

ATP is bound at residue 6-13 (DVGNTSIY). 102–105 (GADL) contacts substrate. Catalysis depends on Asp-104, which acts as the Proton acceptor. Asp-122 is a K(+) binding site. Thr-125 serves as a coordination point for ATP. Substrate is bound at residue Thr-176.

It belongs to the type III pantothenate kinase family. Homodimer. It depends on NH4(+) as a cofactor. K(+) serves as cofactor.

It localises to the cytoplasm. It catalyses the reaction (R)-pantothenate + ATP = (R)-4'-phosphopantothenate + ADP + H(+). It functions in the pathway cofactor biosynthesis; coenzyme A biosynthesis; CoA from (R)-pantothenate: step 1/5. In terms of biological role, catalyzes the phosphorylation of pantothenate (Pan), the first step in CoA biosynthesis. In Acholeplasma laidlawii (strain PG-8A), this protein is Type III pantothenate kinase.